Consider the following 570-residue polypeptide: Arginine--tRNA ligase (570 aa).

The 'HIGH' region motif lies at 127-137 (ANPTGPLHLGH).

This sequence belongs to the class-I aminoacyl-tRNA synthetase family. In terms of assembly, monomer.

It is found in the cytoplasm. It catalyses the reaction tRNA(Arg) + L-arginine + ATP = L-arginyl-tRNA(Arg) + AMP + diphosphate. The polypeptide is Arginine--tRNA ligase (Neorickettsia sennetsu (strain ATCC VR-367 / Miyayama) (Ehrlichia sennetsu)).